A 1676-amino-acid polypeptide reads, in one-letter code: DNA-directed RNA polymerase subunit beta'-beta'' (1676 aa).

The segment at 1 to 582 (MCDAIQIRLA…FLKTTPGRII (582 aa)) is DNA-directed RNA polymerase subunit beta'. Positions 64, 66, 79, and 82 each coordinate Zn(2+). Residues Asp454, Asp456, and Asp458 each coordinate Mg(2+). The interval 583 to 1676 (FYQQAAYHVG…IPAGTGAKYL (1094 aa)) is DNA-directed RNA polymerase subunit beta''. Zn(2+) contacts are provided by Cys804, Cys859, Cys866, and Cys869.

The protein in the N-terminal section; belongs to the RNA polymerase beta' chain family. RpoC1 subfamily. It in the C-terminal section; belongs to the RNA polymerase beta' chain family. RpoC2 subfamily. As to quaternary structure, in plastids the minimal PEP RNA polymerase catalytic core is composed of four subunits: alpha, beta, beta', and beta''. When a (nuclear-encoded) sigma factor is associated with the core the holoenzyme is formed, which can initiate transcription. Beta' and beta'' are fused in this algae. Requires Mg(2+) as cofactor. Zn(2+) is required as a cofactor.

It localises to the plastid. It is found in the chloroplast. The catalysed reaction is RNA(n) + a ribonucleoside 5'-triphosphate = RNA(n+1) + diphosphate. DNA-dependent RNA polymerase catalyzes the transcription of DNA into RNA using the four ribonucleoside triphosphates as substrates. The protein is DNA-directed RNA polymerase subunit beta'-beta'' of Cyanidioschyzon merolae (strain NIES-3377 / 10D) (Unicellular red alga).